Reading from the N-terminus, the 657-residue chain is 1-deoxy-D-xylulose-5-phosphate synthase (657 aa).

Thiamine diphosphate-binding positions include His-73 and 113 to 115 (SHA). Asp-145 contributes to the Mg(2+) binding site. Residues 146-147 (GA), Asn-175, Tyr-293, and Glu-375 each bind thiamine diphosphate. Mg(2+) is bound at residue Asn-175.

It belongs to the transketolase family. DXPS subfamily. In terms of assembly, homodimer. Mg(2+) is required as a cofactor. It depends on thiamine diphosphate as a cofactor.

The catalysed reaction is D-glyceraldehyde 3-phosphate + pyruvate + H(+) = 1-deoxy-D-xylulose 5-phosphate + CO2. Its pathway is metabolic intermediate biosynthesis; 1-deoxy-D-xylulose 5-phosphate biosynthesis; 1-deoxy-D-xylulose 5-phosphate from D-glyceraldehyde 3-phosphate and pyruvate: step 1/1. Functionally, catalyzes the acyloin condensation reaction between C atoms 2 and 3 of pyruvate and glyceraldehyde 3-phosphate to yield 1-deoxy-D-xylulose-5-phosphate (DXP). In Paenarthrobacter aurescens (strain TC1), this protein is 1-deoxy-D-xylulose-5-phosphate synthase.